A 296-amino-acid chain; its full sequence is Homoserine kinase (296 aa).

86–96 (KAGSGLGSSAA) is an ATP binding site.

This sequence belongs to the GHMP kinase family. Homoserine kinase subfamily.

It is found in the cytoplasm. It carries out the reaction L-homoserine + ATP = O-phospho-L-homoserine + ADP + H(+). It participates in amino-acid biosynthesis; L-threonine biosynthesis; L-threonine from L-aspartate: step 4/5. Catalyzes the ATP-dependent phosphorylation of L-homoserine to L-homoserine phosphate. In Methanocaldococcus jannaschii (strain ATCC 43067 / DSM 2661 / JAL-1 / JCM 10045 / NBRC 100440) (Methanococcus jannaschii), this protein is Homoserine kinase (thrB).